A 290-amino-acid polypeptide reads, in one-letter code: Multiple sugar-binding transport system permease protein MsmF (290 aa).

7 helical membrane-spanning segments follow: residues 12-32, 72-92, 104-124, 156-176, 201-221, 231-253, and 260-280; these read GWTFLIVPLILQVVFFYFPMF, FTLVLTLALIVGEIVLGIIIA, FFRAWFFFPAVLSGLTVSLIF, VIASIFVLLWQGVAMPIILFL, FWSVELPYLLPSISMVFIMAL, IFALTGGGPNNSTTSLGLLVYNY, and YGYANAIALILFIIIGIVSVL. The ABC transmembrane type-1 domain occupies 70–281; sequence IGFTLVLTLA…IIIGIVSVLQ (212 aa).

It belongs to the binding-protein-dependent transport system permease family. MalFG subfamily.

It is found in the cell membrane. In terms of biological role, involved in a binding protein-dependent transport system responsible for the uptake of melibiose, raffinose and isomaltotriose. The polypeptide is Multiple sugar-binding transport system permease protein MsmF (msmF) (Streptococcus mutans serotype c (strain ATCC 700610 / UA159)).